A 127-amino-acid chain; its full sequence is Small ribosomal subunit protein uS13 (127 aa).

Residues 96 to 118 (LPVRGQRTHTNARTRKGPKRGIV) show a composition bias toward basic residues. Residues 96–127 (LPVRGQRTHTNARTRKGPKRGIVRAKPAAPAR) form a disordered region.

The protein belongs to the universal ribosomal protein uS13 family. Part of the 30S ribosomal subunit. Forms a loose heterodimer with protein S19. Forms two bridges to the 50S subunit in the 70S ribosome.

Functionally, located at the top of the head of the 30S subunit, it contacts several helices of the 16S rRNA. In the 70S ribosome it contacts the 23S rRNA (bridge B1a) and protein L5 of the 50S subunit (bridge B1b), connecting the 2 subunits; these bridges are implicated in subunit movement. Contacts the tRNAs in the A and P-sites. This Myxococcus xanthus (strain DK1622) protein is Small ribosomal subunit protein uS13.